The following is a 228-amino-acid chain: Ribulose-phosphate 3-epimerase (228 aa).

Serine 12 lines the substrate pocket. Histidine 37, aspartate 39, and histidine 70 together coordinate a divalent metal cation. Aspartate 39 serves as the catalytic Proton acceptor. Substrate is bound by residues histidine 70, 146-149 (GFGG), 176-178 (DGG), and 198-199 (GS). Aspartate 176 serves as a coordination point for a divalent metal cation. The Proton donor role is filled by aspartate 176.

The protein belongs to the ribulose-phosphate 3-epimerase family. A divalent metal cation serves as cofactor.

It carries out the reaction D-ribulose 5-phosphate = D-xylulose 5-phosphate. The protein operates within carbohydrate degradation. Catalyzes the reversible epimerization of D-ribulose 5-phosphate to D-xylulose 5-phosphate. The protein is Ribulose-phosphate 3-epimerase of Rhodobacter capsulatus (Rhodopseudomonas capsulata).